Consider the following 887-residue polypeptide: Ubiquitin carboxyl-terminal hydrolase 4 (887 aa).

The 127-residue stretch at 202–328 folds into the Rhodanese domain; the sequence is KEDSLLLIDV…WIKNGGEIDK (127 aa). Disordered stretches follow at residues 358 to 465 and 484 to 505; these read AFPD…PKPP and QKQNRSRSLEPQLPPIPSTLIR. Residues 387-402 show a composition bias toward polar residues; it reads TPPNGSSTLGRINSPV. The 361-residue stretch at 525 to 885 folds into the USP domain; sequence VGLENMGNSC…SAYVLFYHRI (361 aa). The Nucleophile role is filled by Cys-534. His-842 serves as the catalytic Proton acceptor.

Belongs to the peptidase C19 family.

The protein resides in the cytoplasm. Its subcellular location is the late endosome membrane. The enzyme catalyses Thiol-dependent hydrolysis of ester, thioester, amide, peptide and isopeptide bonds formed by the C-terminal Gly of ubiquitin (a 76-residue protein attached to proteins as an intracellular targeting signal).. With respect to regulation, RFU1 is an inhibitor of deubiquitination activity. In terms of biological role, ubiquitin thioesterase that acts at the late endosome/prevacuolar compartment to recover ubiquitin from ubiquitinated membrane proteins en route to the vacuole. Also removes ubiquitin from soluble proteins targeted to proteasomes. Is essential to maintain a normal level of free ubiquitin. Required for promoting coordination of DNA replication and avoids DNA overreplication. The sequence is that of Ubiquitin carboxyl-terminal hydrolase 4 (DOA4) from Candida glabrata (strain ATCC 2001 / BCRC 20586 / JCM 3761 / NBRC 0622 / NRRL Y-65 / CBS 138) (Yeast).